We begin with the raw amino-acid sequence, 89 residues long: Elongation factor 1-beta (89 aa).

The protein belongs to the EF-1-beta/EF-1-delta family.

Its function is as follows. Promotes the exchange of GDP for GTP in EF-1-alpha/GDP, thus allowing the regeneration of EF-1-alpha/GTP that could then be used to form the ternary complex EF-1-alpha/GTP/AAtRNA. In Methanosarcina barkeri (strain Fusaro / DSM 804), this protein is Elongation factor 1-beta.